A 187-amino-acid chain; its full sequence is Bis(5'-nucleosyl)-tetraphosphatase, symmetrical (187 aa).

One can recognise an HD domain in the interval 18-132 (RYQHTIGVME…IFLADYIEPN (115 aa)). Residue H21 participates in ADP binding. The Fe cation site is built by H21, H50, and D51. ADP-binding positions include 51-54 (DYAK), H83, 109-110 (HT), D127, R133, and 170-175 (PIYPDT). Residue D127 participates in Fe cation binding.

It belongs to the Ap4A hydrolase YqeK family. In terms of assembly, homodimer.

It catalyses the reaction P(1),P(4)-bis(5'-adenosyl) tetraphosphate + H2O = 2 ADP + 2 H(+). In terms of biological role, hydrolyzes diadenosine 5',5'''-P1,P4-tetraphosphate (Ap4A) to yield ADP. The chain is Bis(5'-nucleosyl)-tetraphosphatase, symmetrical from Halalkalibacterium halodurans (strain ATCC BAA-125 / DSM 18197 / FERM 7344 / JCM 9153 / C-125) (Bacillus halodurans).